The chain runs to 151 residues: Ubiquitin-conjugating enzyme E2-17 kDa (151 aa).

One can recognise a UBC core domain in the interval 4–150 (PARRRLMRDF…VKACVEQSFI (147 aa)). Cysteine 88 functions as the Glycyl thioester intermediate in the catalytic mechanism.

This sequence belongs to the ubiquitin-conjugating enzyme family.

Its subcellular location is the nucleus. It catalyses the reaction S-ubiquitinyl-[E1 ubiquitin-activating enzyme]-L-cysteine + [E2 ubiquitin-conjugating enzyme]-L-cysteine = [E1 ubiquitin-activating enzyme]-L-cysteine + S-ubiquitinyl-[E2 ubiquitin-conjugating enzyme]-L-cysteine.. Its pathway is protein modification; protein ubiquitination. In terms of biological role, E2 ubiquitin-conjugating enzyme that accepts ubiquitin from the ubiquitin-activating enzyme E1 and transfers it to a E3 ubiquitin-protein ligase. Required for postreplication repair of UV-damaged DNA. Involved in the negative regulation of the Ras/MAPK signaling pathway in the wing by acting with the putative E3 ligases poe, Kcmf1 and Ufd4 to mediate the ubiquitination and proteasomal degradation of rl/MAPK. Required for in mitophagy. The polypeptide is Ubiquitin-conjugating enzyme E2-17 kDa (Drosophila melanogaster (Fruit fly)).